We begin with the raw amino-acid sequence, 543 residues long: CTP synthase (543 aa).

The interval 1–266 is amidoligase domain; the sequence is MTKFIFVTGG…DDIICERFGI (266 aa). Ser-13 is a binding site for CTP. A UTP-binding site is contributed by Ser-13. ATP is bound by residues 14 to 19 and Asp-71; that span reads SLGKGI. 2 residues coordinate Mg(2+): Asp-71 and Glu-140. CTP is bound by residues 147–149, 187–192, and Lys-223; these read DIE and KTKPTQ. UTP-binding positions include 187–192 and Lys-223; that span reads KTKPTQ. A Glutamine amidotransferase type-1 domain is found at 291–543; that stretch reads TVAIVGKYVE…VKAAIDHQNI (253 aa). Position 354 (Gly-354) interacts with L-glutamine. Cys-381 functions as the Nucleophile; for glutamine hydrolysis in the catalytic mechanism. Residues 382-385, Glu-404, and Arg-471 contribute to the L-glutamine site; that span reads LGMQ. Residues His-516 and Glu-518 contribute to the active site.

This sequence belongs to the CTP synthase family. In terms of assembly, homotetramer.

The catalysed reaction is UTP + L-glutamine + ATP + H2O = CTP + L-glutamate + ADP + phosphate + 2 H(+). It catalyses the reaction L-glutamine + H2O = L-glutamate + NH4(+). It carries out the reaction UTP + NH4(+) + ATP = CTP + ADP + phosphate + 2 H(+). The protein operates within pyrimidine metabolism; CTP biosynthesis via de novo pathway; CTP from UDP: step 2/2. Allosterically activated by GTP, when glutamine is the substrate; GTP has no effect on the reaction when ammonia is the substrate. The allosteric effector GTP functions by stabilizing the protein conformation that binds the tetrahedral intermediate(s) formed during glutamine hydrolysis. Inhibited by the product CTP, via allosteric rather than competitive inhibition. In terms of biological role, catalyzes the ATP-dependent amination of UTP to CTP with either L-glutamine or ammonia as the source of nitrogen. Regulates intracellular CTP levels through interactions with the four ribonucleotide triphosphates. This Psychrobacter sp. (strain PRwf-1) protein is CTP synthase.